We begin with the raw amino-acid sequence, 394 residues long: Chorismate synthase (394 aa).

NADP(+) is bound by residues Arg-40 and Arg-46. Residues 135 to 137 (RAS) and 255 to 256 (QA) contribute to the FMN site. Residues 270–291 (RRRGSGAHDEIEPAGAGSRRVR) are disordered. Residues Gly-302, 317-321 (KPISS), and Arg-343 contribute to the FMN site.

This sequence belongs to the chorismate synthase family. As to quaternary structure, homotetramer. FMNH2 serves as cofactor.

The enzyme catalyses 5-O-(1-carboxyvinyl)-3-phosphoshikimate = chorismate + phosphate. It participates in metabolic intermediate biosynthesis; chorismate biosynthesis; chorismate from D-erythrose 4-phosphate and phosphoenolpyruvate: step 7/7. In terms of biological role, catalyzes the anti-1,4-elimination of the C-3 phosphate and the C-6 proR hydrogen from 5-enolpyruvylshikimate-3-phosphate (EPSP) to yield chorismate, which is the branch point compound that serves as the starting substrate for the three terminal pathways of aromatic amino acid biosynthesis. This reaction introduces a second double bond into the aromatic ring system. This Frankia casuarinae (strain DSM 45818 / CECT 9043 / HFP020203 / CcI3) protein is Chorismate synthase.